The following is a 527-amino-acid chain: Peptide chain release factor 3 (527 aa).

Residues 9–278 form the tr-type G domain; the sequence is DIRRTFAIIS…GLTQWAPKPQ (270 aa). GTP is bound by residues 18-25, 86-90, and 140-143; these read SHPDAGKT, DTPGH, and NKCD.

It belongs to the TRAFAC class translation factor GTPase superfamily. Classic translation factor GTPase family. PrfC subfamily.

It is found in the cytoplasm. Increases the formation of ribosomal termination complexes and stimulates activities of RF-1 and RF-2. It binds guanine nucleotides and has strong preference for UGA stop codons. It may interact directly with the ribosome. The stimulation of RF-1 and RF-2 is significantly reduced by GTP and GDP, but not by GMP. This is Peptide chain release factor 3 from Shewanella denitrificans (strain OS217 / ATCC BAA-1090 / DSM 15013).